Here is a 123-residue protein sequence, read N- to C-terminus: Large ribosomal subunit protein uL14 (123 aa).

It belongs to the universal ribosomal protein uL14 family. As to quaternary structure, part of the 50S ribosomal subunit. Forms a cluster with proteins L3 and L19. In the 70S ribosome, L14 and L19 interact and together make contacts with the 16S rRNA in bridges B5 and B8.

Its function is as follows. Binds to 23S rRNA. Forms part of two intersubunit bridges in the 70S ribosome. The polypeptide is Large ribosomal subunit protein uL14 (Photobacterium profundum (strain SS9)).